The chain runs to 38 residues: Photosystem II reaction center protein L (38 aa).

Residues 17-37 traverse the membrane as a helical segment; the sequence is SLYWGLLLIFVLAVLFSNYFF.

It belongs to the PsbL family. As to quaternary structure, PSII is composed of 1 copy each of membrane proteins PsbA, PsbB, PsbC, PsbD, PsbE, PsbF, PsbH, PsbI, PsbJ, PsbK, PsbL, PsbM, PsbT, PsbX, PsbY, PsbZ, Psb30/Ycf12, at least 3 peripheral proteins of the oxygen-evolving complex and a large number of cofactors. It forms dimeric complexes.

Its subcellular location is the plastid. The protein resides in the chloroplast thylakoid membrane. Its function is as follows. One of the components of the core complex of photosystem II (PSII). PSII is a light-driven water:plastoquinone oxidoreductase that uses light energy to abstract electrons from H(2)O, generating O(2) and a proton gradient subsequently used for ATP formation. It consists of a core antenna complex that captures photons, and an electron transfer chain that converts photonic excitation into a charge separation. This subunit is found at the monomer-monomer interface and is required for correct PSII assembly and/or dimerization. This chain is Photosystem II reaction center protein L, found in Antirrhinum majus (Garden snapdragon).